A 187-amino-acid polypeptide reads, in one-letter code: GTP cyclohydrolase 1 (187 aa).

Positions 79, 82, and 150 each coordinate Zn(2+).

Belongs to the GTP cyclohydrolase I family. Toroid-shaped homodecamer, composed of two pentamers of five dimers.

The catalysed reaction is GTP + H2O = 7,8-dihydroneopterin 3'-triphosphate + formate + H(+). It participates in cofactor biosynthesis; 7,8-dihydroneopterin triphosphate biosynthesis; 7,8-dihydroneopterin triphosphate from GTP: step 1/1. In Fusobacterium nucleatum subsp. nucleatum (strain ATCC 25586 / DSM 15643 / BCRC 10681 / CIP 101130 / JCM 8532 / KCTC 2640 / LMG 13131 / VPI 4355), this protein is GTP cyclohydrolase 1.